Reading from the N-terminus, the 290-residue chain is NAD kinase (290 aa).

Aspartate 72 acts as the Proton acceptor in catalysis. NAD(+) is bound by residues 72 to 73, lysine 77, 145 to 146, aspartate 175, 186 to 191, and alanine 210; these read DG, NE, and TAYSLS.

The protein belongs to the NAD kinase family. A divalent metal cation is required as a cofactor.

The protein localises to the cytoplasm. The enzyme catalyses NAD(+) + ATP = ADP + NADP(+) + H(+). Functionally, involved in the regulation of the intracellular balance of NAD and NADP, and is a key enzyme in the biosynthesis of NADP. Catalyzes specifically the phosphorylation on 2'-hydroxyl of the adenosine moiety of NAD to yield NADP. The sequence is that of NAD kinase from Bacteroides fragilis (strain YCH46).